A 579-amino-acid chain; its full sequence is Nuclear hormone receptor family member nhr-71 (579 aa).

Positions 8-83 (SQECMVCSAP…AGMKIGAVQP (76 aa)) form a DNA-binding region, nuclear receptor. NR C4-type zinc fingers lie at residues 11-31 (CMVC…CRSC) and 47-71 (CKHT…FTKC). 2 disordered regions span residues 82–124 (QPRR…SDGP) and 168–189 (EPIP…PNDD). Composition is skewed to polar residues over residues 106-124 (SMNN…SDGP) and 171-186 (PSTS…QSSP). Residues 189-452 (DEQQEFNHLV…KFWYETLCYA (264 aa)) form the NR LBD domain.

This sequence belongs to the nuclear hormone receptor family.

It localises to the nucleus. Orphan nuclear receptor. The chain is Nuclear hormone receptor family member nhr-71 (nhr-71) from Caenorhabditis elegans.